The primary structure comprises 365 residues: uncharacterized protein (365 aa).

3 disordered regions span residues 119 to 157 (ERSR…QQES), 216 to 298 (RPPG…DISH), and 313 to 365 (SHHH…LSVG). Residues 326 to 340 (SDPRIESRDLPERPQ) show a composition bias toward basic and acidic residues.

This is an uncharacterized protein from Homo sapiens (Human).